Consider the following 58-residue polypeptide: Ribulose bisphosphate carboxylase large chain (58 aa).

Positions Met-1–Ser-2 are excised as a propeptide. The residue at position 3 (Pro-3) is an N-acetylproline. Position 14 is an N6,N6,N6-trimethyllysine (Lys-14).

The protein belongs to the RuBisCO large chain family. Type I subfamily. In terms of assembly, heterohexadecamer of 8 large chains and 8 small chains.

It is found in the plastid. It localises to the chloroplast. The enzyme catalyses 2 (2R)-3-phosphoglycerate + 2 H(+) = D-ribulose 1,5-bisphosphate + CO2 + H2O. The catalysed reaction is D-ribulose 1,5-bisphosphate + O2 = 2-phosphoglycolate + (2R)-3-phosphoglycerate + 2 H(+). Its function is as follows. RuBisCO catalyzes two reactions: the carboxylation of D-ribulose 1,5-bisphosphate, the primary event in carbon dioxide fixation, as well as the oxidative fragmentation of the pentose substrate in the photorespiration process. Both reactions occur simultaneously and in competition at the same active site. This is Ribulose bisphosphate carboxylase large chain (rbcL) from Euphorbia characias (Albanian spurge).